The sequence spans 167 residues: Ribonuclease P protein subunit p20 (167 aa).

Residues 1–36 are disordered; sequence MMGSNYPEHGTKPRSAKYHKQQNHRVVRKQPPRPAV. A compositionally biased stretch (basic residues) spans 12 to 31; it reads KPRSAKYHKQQNHRVVRKQP.

In terms of assembly, interacts with Smn.

The protein localises to the nucleus. It localises to the nucleolus. The protein resides in the cytoplasm. It is found in the cytoplasmic granule. Functionally, component of ribonuclease P, a protein complex that generates mature tRNA molecules by cleaving their 5'-ends. Also a component of RNase MRP complex, which cleaves pre-rRNA sequences. This Drosophila melanogaster (Fruit fly) protein is Ribonuclease P protein subunit p20.